We begin with the raw amino-acid sequence, 315 residues long: Ankyrin repeat domain-containing protein SOWAHD (315 aa).

Residues 1-39 (MAQLGGAANRAPTASLAPTSQSLRCAPQPRPSRADTGSL) are disordered. ANK repeat units lie at residues 112–141 (PREH…ELLL), 147–162 (TGYS…GRHE), and 186–216 (GGLT…DATR).

This sequence belongs to the SOWAH family.

This is Ankyrin repeat domain-containing protein SOWAHD (SOWAHD) from Homo sapiens (Human).